A 525-amino-acid chain; its full sequence is Glutamate synthase large subunit-like protein YerD (525 aa).

Residues isoleucine 4–alanine 24 traverse the membrane as a helical segment.

Belongs to the glutamate synthase family.

It is found in the cell membrane. The polypeptide is Glutamate synthase large subunit-like protein YerD (yerD) (Bacillus subtilis (strain 168)).